Here is a 146-residue protein sequence, read N- to C-terminus: Transcriptional regulator MraZ (146 aa).

2 consecutive SpoVT-AbrB domains span residues 5-48 (TSYH…TLEE) and 77-120 (ASEC…SRAK).

The protein belongs to the MraZ family. In terms of assembly, forms oligomers.

Its subcellular location is the cytoplasm. The protein resides in the nucleoid. The polypeptide is Transcriptional regulator MraZ (Desulfosudis oleivorans (strain DSM 6200 / JCM 39069 / Hxd3) (Desulfococcus oleovorans)).